The chain runs to 306 residues: Probable pinoresinol-lariciresinol reductase 3 (306 aa).

NADP(+) is bound by residues 14–20 (GATGRLG), Arg-39, and Lys-46. The active-site Proton acceptor is Lys-131. Position 135 (Arg-135) interacts with NADP(+).

The protein belongs to the NmrA-type oxidoreductase family. Isoflavone reductase subfamily. Dimer.

Probable reductase that might be involved in the reduction of lariciresinol into secoisolariciresinol. In most plant species, a single enzyme is able to reduce both pinoresinol and lariciresinol efficiently while in Arabidopsis, PRR1 and PRR2 show a strict substrate selectivity for pinoresinol. This is Probable pinoresinol-lariciresinol reductase 3 (PLR3) from Arabidopsis thaliana (Mouse-ear cress).